Consider the following 960-residue polypeptide: Testis anion transporter 1 (960 aa).

The Cytoplasmic segment spans residues 1-93 (MQPDRSFQSF…YRFKDWLLGD (93 aa)). A helical transmembrane segment spans residues 94–114 (LLAGISVGLVQIPQVLMLGLL). Residues 115–117 (ARH) are Extracellular-facing. The helical transmembrane segment at 118–138 (LIPPLNVSYAAFCASVIYGIF) threads the bilayer. Gly139 is a topological domain (cytoplasmic). Residues 140 to 160 (SCHQMSIGTFFLVSALAINVL) traverse the membrane as a helical segment. Over 161 to 201 (RTQPFNRGHLLLGTFIQADFSNTSFYENYNRSLSSVASVTL) the chain is Extracellular. Asn190 carries N-linked (GlcNAc...) asparagine glycosylation. The next 2 membrane-spanning stretches (helical) occupy residues 202–222 (LTGI…VAYI) and 223–243 (PEAA…LSQL). The Cytoplasmic segment spans residues 244 to 268 (TCIFGIMISYNSGPIAFFYNIINYC). Residues 269–289 (LGLPKANSTSILLFLTAMVAL) form a helical membrane-spanning segment. Over 290 to 353 (RINKCIRISF…PVTPDMSNLT (64 aa)) the chain is Extracellular. Residues 354-374 (EVLIESFSLALVSSSLLVFLG) traverse the membrane as a helical segment. Over 375-390 (KKIASFHNYDVNSNQD) the chain is Cytoplasmic. Residues 391–411 (LIAIGLCNVVSSFFRSYVFTG) form a helical membrane-spanning segment. The Extracellular portion of the chain corresponds to 412–427 (AVARTIIQDKTGGRQQ). A helical transmembrane segment spans residues 428–448 (FASLVGAGIMLLLMMKMARFF). Topologically, residues 449–453 (YRLPN) are cytoplasmic. Residues 454–474 (AIVAGIILSNVLPYLEAVYTL) form a helical membrane-spanning segment. Over 475–494 (PSLWRQNQYDCLIWMVTFMS) the chain is Extracellular. A helical transmembrane segment spans residues 495 to 515 (AILLGLDIGLVVAVTFAFFII). Residues 516–960 (TVQSHRTKIL…ADTSEDALEI (445 aa)) are Cytoplasmic-facing. The 252-residue stretch at 541–792 (DYREVANIPG…LTLHDAVLFA (252 aa)) folds into the STAS domain. The segment at 662–957 (ITSSSSQRNP…TSKADTSEDA (296 aa)) is interaction with RACGAP1. Disordered stretches follow at residues 807 to 857 (ESET…EESD) and 881 to 960 (EVEP…ALEI). Residues 818 to 827 (ETDKKEESRH) show a composition bias toward basic and acidic residues. Positions 884–904 (PESELEPESELDQETELEPEP) are enriched in acidic residues. A compositionally biased stretch (polar residues) spans 926-935 (SPTQTQARTQ).

It belongs to the SLC26A/SulP transporter (TC 2.A.53) family. As to quaternary structure, interacts with RACGAP1. Interacts with CFTR; stimulates anion transport activity of CFTR. In terms of processing, N-glycosylated.

The protein resides in the membrane. The enzyme catalyses sulfate(out) + chloride(in) = sulfate(in) + chloride(out). It catalyses the reaction oxalate(in) + chloride(out) = oxalate(out) + chloride(in). Antiporter that mediates the exchange of sulfate and oxalate against chloride ions across a membrane. Stimulates anion transport activity of CFTR. May cooperate with CFTR in the regulation of chloride and bicarbonate ions fluxes required for activation of the ADCY10/PKA pathway during sperm motility and sperm capacitation. May play a role in sperm tail differentiation and motility and hence male fertility. In Bos taurus (Bovine), this protein is Testis anion transporter 1.